A 328-amino-acid chain; its full sequence is Interleukin-12 subunit beta (328 aa).

The first 22 residues, 1 to 22 (MCHQQLVISWFSLVFLASPLMA), serve as a signal peptide directing secretion. The region spanning 29 to 106 (DVYVVELDWY…LSHSLLLLHK (78 aa)) is the Ig-like C2-type domain. Cys50 and Cys90 are joined by a disulfide. Asn125, Asn135, Asn222, and Asn303 each carry an N-linked (GlcNAc...) asparagine glycan. Positions 237–328 (PPKNLQLKPL…WSEWASVPCS (92 aa)) constitute a Fibronectin type-III domain.

Belongs to the IL-12B family. As to quaternary structure, heterodimer with IL12A; disulfide-linked. The heterodimer is known as interleukin IL-12. Heterodimer with IL23A; disulfide-linked. The heterodimer is known as interleukin IL-23. Also secreted as a monomer. Interacts with NBR1; this interaction promotes IL-12 secretion.

It is found in the secreted. Its function is as follows. Cytokine that can act as a growth factor for activated T and NK cells, enhance the lytic activity of NK/lymphokine-activated killer cells, and stimulate the production of IFN-gamma by resting PBMC. Functionally, associates with IL23A to form the IL-23 interleukin, a heterodimeric cytokine which functions in innate and adaptive immunity. IL-23 may constitute with IL-17 an acute response to infection in peripheral tissues. IL-23 binds to a heterodimeric receptor complex composed of IL12RB1 and IL23R, activates the Jak-Stat signaling cascade, stimulates memory rather than naive T-cells and promotes production of pro-inflammatory cytokines. IL-23 induces autoimmune inflammation and thus may be responsible for autoimmune inflammatory diseases and may be important for tumorigenesis. The sequence is that of Interleukin-12 subunit beta (IL12B) from Papio anubis (Olive baboon).